The following is a 320-amino-acid chain: MNHTSDTALLIVNLGTPEAPTAAAVRRYLGEFLSDRRVVSIPPLFWKPLLHMVILPIRGPRSASKYAKVWLQEGSPLSVYTRRIAEGLTQHLPDWRVAWAMRYGAPALTKALDALQAQQVRRIVILPLYPQYSTTTTASVQDVVEAWCKRTPQVQVECIQDYAEDPAWVAAVAASIRRHWQAHGRSEKLMFSFHGLPQRVANNGDPYPQRCQVSASLIAAALNLNESEWVLGYQSRFGAERWLQPYAEPTLWALAESGIRRFDLVCPGFSVDCLETLEEVALGFSETLAARGATMRYIPCLNDDPAHVQALAGLAQRALP.

The Fe cation site is built by histidine 194 and glutamate 275.

This sequence belongs to the ferrochelatase family.

The protein resides in the cytoplasm. It catalyses the reaction heme b + 2 H(+) = protoporphyrin IX + Fe(2+). It functions in the pathway porphyrin-containing compound metabolism; protoheme biosynthesis; protoheme from protoporphyrin-IX: step 1/1. In terms of biological role, catalyzes the ferrous insertion into protoporphyrin IX. This chain is Ferrochelatase, found in Xylella fastidiosa (strain M23).